The following is a 416-amino-acid chain: Neurotensin receptor type 2 (416 aa).

Over 1–32 (METSSPWPPRPSPSAGLSLEARLGVDTRLWAK) the chain is Extracellular. A helical membrane pass occupies residues 33–55 (VLFTALYSLIFAFGTAGNALSVH). Topologically, residues 56 to 64 (VVLKARAGR) are cytoplasmic. A helical transmembrane segment spans residues 65–87 (PGRLRYHVLSLALSALLLLLVSM). Residues 88-109 (PMELYNFVWSHYPWVFGDLGCR) are Extracellular-facing. C108 and C194 are oxidised to a cystine. The helical transmembrane segment at 110–131 (GYYFVRELCAYATVLSVASLSA) threads the bilayer. Residues 132-154 (ERCLAVCQPLRARRLLTPRRTRR) lie on the Cytoplasmic side of the membrane. The chain crosses the membrane as a helical span at residues 155–176 (LLSLVWVASLGLALPMAVIMGQ). Residues 177–216 (KHEVESADGEPEPASRVCTVLVSRATLQVFIQVNVLVSFA) lie on the Extracellular side of the membrane. A helical membrane pass occupies residues 217–237 (LPLALTAFLNGITVNHLMALY). The Cytoplasmic portion of the chain corresponds to 238–297 (SQVPSASAQVSSIPSRLELLSEEGLLGFITWRKTLSLGVQASLVRHKDASQIRSLQHSAQ). Residues 298-318 (VLRAIVAVYVICWLPYHARRL) traverse the membrane as a helical segment. At 319 to 337 (MYCYIPDDGWTNELYDFYH) the chain is on the extracellular side. A helical transmembrane segment spans residues 338–358 (YFYMVTNTLFYVSSAVTPILY). Topologically, residues 359–416 (NAVSSSFRKLFLESLGSLCGEQHSLVPLPQEAPESTTSTYSFRLWGSPRNPSLGEIQV) are cytoplasmic. The S-palmitoyl cysteine moiety is linked to residue C377. S410 carries the post-translational modification Phosphoserine.

This sequence belongs to the G-protein coupled receptor 1 family. Neurotensin receptor subfamily. NTSR2 sub-subfamily. As to expression, abundant in cortex and hypothalamus, and lower levels seen in the heart and intestine.

Its subcellular location is the cell membrane. Functionally, receptor for the tridecapeptide neurotensin. It is associated with G proteins that activate a phosphatidylinositol-calcium second messenger system. In Rattus norvegicus (Rat), this protein is Neurotensin receptor type 2 (Ntsr2).